Consider the following 450-residue polypeptide: Tubulin alpha-6 chain (450 aa).

GTP is bound by residues glutamine 11, glutamate 71, glycine 144, threonine 145, threonine 179, asparagine 206, and asparagine 228. Glutamate 71 provides a ligand contact to Mg(2+). Glutamate 254 is an active-site residue.

The protein belongs to the tubulin family. As to quaternary structure, dimer of alpha and beta chains. A typical microtubule is a hollow water-filled tube with an outer diameter of 25 nm and an inner diameter of 15 nM. Alpha-beta heterodimers associate head-to-tail to form protofilaments running lengthwise along the microtubule wall with the beta-tubulin subunit facing the microtubule plus end conferring a structural polarity. Microtubules usually have 13 protofilaments but different protofilament numbers can be found in some organisms and specialized cells. Mg(2+) is required as a cofactor. In terms of processing, undergoes a tyrosination/detyrosination cycle, the cyclic removal and re-addition of a C-terminal tyrosine residue by the enzymes tubulin tyrosine carboxypeptidase (TTCP) and tubulin tyrosine ligase (TTL), respectively.

It is found in the cytoplasm. The protein resides in the cytoskeleton. The enzyme catalyses GTP + H2O = GDP + phosphate + H(+). Its function is as follows. Tubulin is the major constituent of microtubules, a cylinder consisting of laterally associated linear protofilaments composed of alpha- and beta-tubulin heterodimers. Microtubules grow by the addition of GTP-tubulin dimers to the microtubule end, where a stabilizing cap forms. Below the cap, tubulin dimers are in GDP-bound state, owing to GTPase activity of alpha-tubulin. The chain is Tubulin alpha-6 chain (TUBA6) from Zea mays (Maize).